The sequence spans 280 residues: F420-dependent methylenetetrahydromethanopterin dehydrogenase (280 aa).

This sequence belongs to the MTD family.

The enzyme catalyses 5,10-methylenetetrahydromethanopterin + oxidized coenzyme F420-(gamma-L-Glu)(n) + 2 H(+) = 5,10-methenyl-5,6,7,8-tetrahydromethanopterin + reduced coenzyme F420-(gamma-L-Glu)(n). Its pathway is one-carbon metabolism; methanogenesis from CO(2); 5,10-methylene-5,6,7,8-tetrahydromethanopterin from 5,10-methenyl-5,6,7,8-tetrahydromethanopterin (coenzyme F420 route): step 1/1. Functionally, catalyzes the reversible reduction of methenyl-H(4)MPT(+) to methylene-H(4)MPT. This is F420-dependent methylenetetrahydromethanopterin dehydrogenase from Methanoculleus marisnigri (strain ATCC 35101 / DSM 1498 / JR1).